The following is a 674-amino-acid chain: Forkhead box protein P1 (674 aa).

Over residues 1–19 (MMQESGTETKSNGSAIQNG) the composition is skewed to polar residues. Residues 1–44 (MMQESGTETKSNGSAIQNGSSGGNHLLECGSLREGRSNGETPAV) form a disordered region. Residue S82 is modified to Phosphoserine. Residues 269 to 281 (MNPHASTNGQLSV) are compositionally biased toward polar residues. Positions 269 to 296 (MNPHASTNGQLSVHTPKRESLSHEEHPH) are disordered. Positions 284-296 (PKRESLSHEEHPH) are enriched in basic and acidic residues. K285 participates in a covalent cross-link: Glycyl lysine isopeptide (Lys-Gly) (interchain with G-Cter in SUMO2). The C2H2-type zinc finger occupies 304-329 (GVCKWPGCEAVCEDFQSFLKHLNSEH). The leucine-zipper stretch occupies residues 346–367 (VQQLELQLAKDKERLQAMMTHL). Glycyl lysine isopeptide (Lys-Gly) (interchain with G-Cter in SUMO2) cross-links involve residues K370 and K375. Positions 380-384 (PLNLV) are CTBP1-binding. Over residues 388 to 401 (TLSKSASEASPQSL) the composition is skewed to polar residues. A disordered region spans residues 388–427 (TLSKSASEASPQSLPHTPTTPTAPITPATQGPSVITTTSM). The segment covering 402–419 (PHTPTTPTAPITPATQGP) has biased composition (low complexity). Residue K440 forms a Glycyl lysine isopeptide (Lys-Gly) (interchain with G-Cter in SUMO2) linkage. Residues 462–552 (RPPFTYASLI…PQKISGNPSL (91 aa)) constitute a DNA-binding region (fork-head). The segment at 608 to 674 (EHTNSNESDS…EDEPVNEDME (67 aa)) is disordered. Polar residues predominate over residues 609-620 (HTNSNESDSSPG). T650 is subject to Phosphothreonine. At S655 the chain carries Phosphoserine. Residues 664–674 (YEDEPVNEDME) are compositionally biased toward acidic residues.

In terms of assembly, forms homodimers and heterodimers with FOXP2 and FOXP4. Dimerization is required for DNA-binding. Self-associates. Interacts with CTBP1. Interacts with NCOR2 and AR. Interacts with FOXP2. Interacts with TBR1. Interacts with AURKA; this interaction facilitates the phosphorylation of FOXP1, which suppresses the expression of FBXL7. Interacts with ZMYM2.

The protein resides in the nucleus. Its function is as follows. Transcriptional repressor. Can act with CTBP1 to synergistically repress transcription but CTPBP1 is not essential. Plays an important role in the specification and differentiation of lung epithelium. Acts cooperatively with FOXP4 to regulate lung secretory epithelial cell fate and regeneration by restricting the goblet cell lineage program; the function may involve regulation of AGR2. Essential transcriptional regulator of B-cell development. Involved in regulation of cardiac muscle cell proliferation. Involved in the columnar organization of spinal motor neurons. Promotes the formation of the lateral motor neuron column (LMC) and the preganglionic motor column (PGC) and is required for respective appropriate motor axon projections. The segment-appropriate generation of spinal cord motor columns requires cooperation with other Hox proteins. Can regulate PITX3 promoter activity; may promote midbrain identity in embryonic stem cell-derived dopamine neurons by regulating PITX3. Negatively regulates the differentiation of T follicular helper cells T(FH)s. Involved in maintenance of hair follicle stem cell quiescence; the function probably involves regulation of FGF18. Represses transcription of various pro-apoptotic genes and cooperates with NF-kappa B-signaling in promoting B-cell expansion by inhibition of caspase-dependent apoptosis. Binds to CSF1R promoter elements and is involved in regulation of monocyte differentiation and macrophage functions; repression of CSF1R in monocytes seems to involve NCOR2 as corepressor. Involved in endothelial cell proliferation, tube formation and migration indicative for a role in angiogenesis; the role in neovascularization seems to implicate suppression of SEMA5B. Can negatively regulate androgen receptor signaling. Acts as a transcriptional activator of the FBXL7 promoter; this activity is regulated by AURKA. The polypeptide is Forkhead box protein P1 (FOXP1) (Bos taurus (Bovine)).